We begin with the raw amino-acid sequence, 76 residues long: Conotoxin Vc6.3 (76 aa).

An N-terminal signal peptide occupies residues 1–22; sequence MKLTCVMIVAVLFLTANTFATA. Residues 23–50 constitute a propeptide that is removed on maturation; it reads DDPRNGLRDLFSIAHHEMKNPEASKLNE. 3 cysteine pairs are disulfide-bonded: cysteine 52/cysteine 66, cysteine 59/cysteine 70, and cysteine 67/cysteine 75.

The protein belongs to the conotoxin O1 superfamily. In terms of tissue distribution, expressed by the venom duct.

The protein localises to the secreted. The sequence is that of Conotoxin Vc6.3 from Conus victoriae (Queen Victoria cone).